A 417-amino-acid polypeptide reads, in one-letter code: Phosphoglycerate kinase 1 (417 aa).

Position 2 is an N-acetylserine (Ser2). A phosphoserine mark is found at Ser2 and Ser4. Lys6 is modified (N6-succinyllysine). Lys11 carries the post-translational modification N6-acetyllysine. (2R)-3-phosphoglycerate is bound by residues Val23, Asp24, Phe25, Asn26, Gln38, and Arg39. Residues 38–43 (QRIKAA) are mitochondrial targeting region exposed following cis-trans isomerization by PIN1 and recognized by the TOM complex for mitochondrial translocation of the protein. N6-acetyllysine; alternate is present on Lys48. Lys48 carries the N6-succinyllysine; alternate modification. Ser62, His63, Gly65, and Arg66 together coordinate (2R)-3-phosphoglycerate. N6-acetyllysine is present on Lys75. Tyr76 is modified (phosphotyrosine). Lys86 and Lys91 each carry N6-acetyllysine. Lys97 carries the post-translational modification N6-acetyllysine; alternate. Position 97 is an N6-(2-hydroxyisobutyryl)lysine; alternate (Lys97). Positions 122 and 123 each coordinate (2R)-3-phosphoglycerate. Lys131 carries the N6-acetyllysine; alternate modification. The residue at position 131 (Lys131) is an N6-malonyllysine; alternate. The residue at position 146 (Lys146) is an N6-acetyllysine. His170 and Arg171 together coordinate (2R)-3-phosphoglycerate. Lys191 is modified (N6-succinyllysine). Tyr196 bears the Phosphotyrosine mark. N6-acetyllysine is present on Lys199. At Ser203 the chain carries Phosphoserine. Gly214 contributes to the ADP binding site. Gly214 contributes to the CDP binding site. Residues Ala215 and Lys216 each contribute to the AMP site. Ala215 is an ATP binding site. Ala215 serves as a coordination point for Mg(2+). At Lys216 the chain carries N6-(2-hydroxyisobutyryl)lysine. Positions 218 and 219 each coordinate Mg(2+). CDP is bound at residue Asp219. Lys220 is a binding site for AMP. Lys220 is a binding site for ATP. N6-(2-hydroxyisobutyryl)lysine is present on Lys220. Gly238 is an ADP binding site. Gly238 is a binding site for CDP. Gly239 is an AMP binding site. Gly239 provides a ligand contact to ATP. 2 positions are modified to N6-acetyllysine: Lys267 and Lys291. Gly313 contacts AMP. Gly313 contacts ATP. Lys323 carries the N6-(2-hydroxyisobutyryl)lysine modification. Positions 338, 340, and 343 each coordinate CDP. Residue Phe343 coordinates ADP. AMP is bound at residue Glu344. Glu344 contributes to the ATP binding site. N6-acetyllysine is present on Lys361. 2 residues coordinate ATP: Asp375 and Thr376. Mg(2+) is bound at residue Asp375.

The protein belongs to the phosphoglycerate kinase family. Monomer. Interacts with kinase MAPK1/ERK2; the interaction is direct, occurs under hypoxic conditions, and promotes its interaction with PIN1. Interacts with peptidyl-prolyl cis-trans isomerase PIN1; the interaction is direct, occurs under hypoxic conditions, and targets the protein to the mitochondrion by promoting interactions with the TOM complex. Interacts with mitochondrial circRNA mcPGK1 (via its 2nd stem-loop); the interaction is direct and targets the protein to the mitochondrion by promoting interactions with the TOM complex. Interacts with pyruvate dehydrogenase kinase PDK1; the interaction is direct, occurs under hypoxic conditions and leads to PDK1-mediated inhibition of pyruvate dehydrogenase complex activity. The cofactor is Mg(2+). Phosphorylated at Ser-203 by MAPK1/ERK2 under hypoxic conditions, which promotes its mitochondrial targeting.

It is found in the cytoplasm. The protein resides in the cytosol. It localises to the mitochondrion matrix. It carries out the reaction (2R)-3-phosphoglycerate + ATP = (2R)-3-phospho-glyceroyl phosphate + ADP. The enzyme catalyses L-seryl-[protein] + ATP = O-phospho-L-seryl-[protein] + ADP + H(+). It participates in carbohydrate degradation; glycolysis; pyruvate from D-glyceraldehyde 3-phosphate: step 2/5. Its function is as follows. Catalyzes one of the two ATP producing reactions in the glycolytic pathway via the reversible conversion of 1,3-diphosphoglycerate to 3-phosphoglycerate. Both L- and D- forms of purine and pyrimidine nucleotides can be used as substrates, but the activity is much lower on pyrimidines. In addition to its role as a glycolytic enzyme, it seems that PGK-1 acts as a polymerase alpha cofactor protein (primer recognition protein). Acts as a protein kinase when localized to the mitochondrion where it phosphorylates pyruvate dehydrogenase kinase PDK1 to inhibit pyruvate dehydrogenase complex activity and suppress the formation of acetyl-coenzyme A from pyruvate, and consequently inhibit oxidative phosphorylation and promote glycolysis. May play a role in sperm motility. The polypeptide is Phosphoglycerate kinase 1 (PGK1) (Macaca fascicularis (Crab-eating macaque)).